Consider the following 169-residue polypeptide: Large ribosomal subunit protein uL10 (169 aa).

This sequence belongs to the universal ribosomal protein uL10 family. In terms of assembly, part of the ribosomal stalk of the 50S ribosomal subunit. The N-terminus interacts with L11 and the large rRNA to form the base of the stalk. The C-terminus forms an elongated spine to which L12 dimers bind in a sequential fashion forming a multimeric L10(L12)X complex.

Forms part of the ribosomal stalk, playing a central role in the interaction of the ribosome with GTP-bound translation factors. This chain is Large ribosomal subunit protein uL10, found in Orientia tsutsugamushi (strain Ikeda) (Rickettsia tsutsugamushi).